The chain runs to 941 residues: MVIIGPRGPGSQRLLLSLLLLAAWEVGSGQLHYSVYEEAKHGTFVGRIAQDLGLELAELVPRLFRVASKRHGDLLEVNLQNGILFVNSRIDREKLCGRSAECSIHLEVIVDRPLQVFHVDVEVKDINDNPPVFREREQKVPVSESAPLDSHFPLEGASDADIGVNSLLTYALSLNENFELKIKTKKDKSILPELVLRKLLDREQTPKLNLLLMVIDGGKPELTGSVQIQITVLDVNDNGPAFDKPSYKVVLSENVQNDTRVIQLNASDPDEGLNGEISYGIKMILPVSEKCMFSINPDTGEIRIYGELDFEENNAYEIQVNAIDKGIPSMAGHSMVLVEVLDVNDNVPEVMVTSLSLPVQEDAQVGTVIALISVSDRDSGANGQVICSLTPHVPFKLVSTYKNYYSLVLDSALDRESVSAYELVVTARDGGSPSLWATARVSVEVADVNDNAPAFAQPEYTVFVKENNPPGCHIFTVSAWDADAQKNALVSYSLVERRVGEHALSSYVSVHAESGKVYALQPLDHEELELLQFQVSARDAGVPPLGSNVTLQVFVLDENDNAPALLATPAGSAGGAVSELVPRSVGAGHVVAKVRAVDADSGYNAWLSYELQPAAVGAHIPFHVGLYTGEISTTRILDEADAPRHRLLVLVKDHGEPALTSTATVLVSLVENGQAPKTSSRASVGAVDPEAALVDINVYLIIAICAVSSLLVLTLLLYTALRCSAPPTVSRCAPGKPTLVCSSAVGSWSYSQQRRQRVCSAESPPKTDLMAFSPSLQLSREDCLNPPSEPRQPNPDWRYSASLRAGMHSSVHLEEAGILRAGPGGPDQQWPTVSSATPEPEAGEVSPPVGAGVNSNSWTFKYGPGNPKQSGPGELPDKFIIPGSPAIISIRQEPTNSQIDKSDFITFGKKEETKKKKKKKKGNKTQEKKEKGNSTTDNSDQ.

Residues 1-29 (MVIIGPRGPGSQRLLLSLLLLAAWEVGSG) form the signal peptide. Cadherin domains lie at 30-133 (QLHY…PPVF), 134-242 (RERE…GPAF), 243-350 (DKPS…VPEV), 351-455 (MVTS…APAF), 456-565 (AQPE…APAL), and 581-678 (VPRS…APKT). Residues 30 to 697 (QLHYSVYEEA…DPEAALVDIN (668 aa)) lie on the Extracellular side of the membrane. N-linked (GlcNAc...) asparagine glycosylation is found at Asn257 and Asn265. Asn548 carries N-linked (GlcNAc...) asparagine glycosylation. A helical transmembrane segment spans residues 698 to 718 (VYLIIAICAVSSLLVLTLLLY). Over 719–941 (TALRCSAPPT…GNSTTDNSDQ (223 aa)) the chain is Cytoplasmic. PXXP repeat units follow at residues 734 to 737 (PGKP), 790 to 793 (PRQP), 823 to 826 (PGGP), 863 to 866 (GPGN), and 882 to 885 (PGSP). Residues 734-885 (PGKPTLVCSS…PDKFIIPGSP (152 aa)) are 5 X 4 AA repeats of P-X-X-P. The segment at 818–941 (ILRAGPGGPD…GNSTTDNSDQ (124 aa)) is disordered. Residues 900-914 (DKSDFITFGKKEETK) are compositionally biased toward basic and acidic residues.

The protein localises to the cell membrane. Its function is as follows. Potential calcium-dependent cell-adhesion protein. May be involved in the establishment and maintenance of specific neuronal connections in the brain. This is Protocadherin alpha-12 (PCDHA12) from Homo sapiens (Human).